Reading from the N-terminus, the 148-residue chain is UPF0179 protein Ta1159 (148 aa).

Belongs to the UPF0179 family.

This is UPF0179 protein Ta1159 from Thermoplasma acidophilum (strain ATCC 25905 / DSM 1728 / JCM 9062 / NBRC 15155 / AMRC-C165).